Here is a 450-residue protein sequence, read N- to C-terminus: F-box/FBD/LRR-repeat protein At5g22660 (450 aa).

An F-box domain is found at 12–58; that stretch reads EDRISSLPDHLLSQILSNLPTENAVTTSILSTRWKDLWLSTPVLDID. LRR repeat units lie at residues 157–181 and 294–317; these read LPNL…KFIS and LSSL…LKHE. In terms of domain architecture, FBD spans 364 to 416; the sequence is EEISLSSSVPKCLQSSLENVEIIRPNYGSGEEMKLSKYFLENSLVLKKFKLCR.

In Arabidopsis thaliana (Mouse-ear cress), this protein is F-box/FBD/LRR-repeat protein At5g22660.